The sequence spans 261 residues: Epidermal growth factor-binding protein type B (261 aa).

The first 16 residues, 1–16 (MWFLILFLALSLGGID), serve as a signal peptide directing secretion. Positions 17–24 (AAPPLQSR) are cleaved as a propeptide — activation peptide. Positions 25 to 258 (VVGGFNCKKN…FNSWIKDTMM (234 aa)) constitute a Peptidase S1 domain. 5 disulfide bridges follow: C31–C173, C50–C66, C152–C219, C184–C198, and C209–C234. H65 (charge relay system) is an active-site residue. N102 carries N-linked (GlcNAc...) asparagine glycosylation. D120 serves as the catalytic Charge relay system. S213 (charge relay system) is an active-site residue.

It belongs to the peptidase S1 family. Kallikrein subfamily.

The enzyme catalyses Hydrolyzes mouse Ren2 protein (a species of prorenin present in the submandibular gland) on the carboxy side of the arginine residue at the Lys-Arg-|- pair in the N-terminus, to yield mature renin.. In terms of biological role, cleaves REN2 at a dibasic site to yield mature renin. In Mus musculus (Mouse), this protein is Epidermal growth factor-binding protein type B (Egfbp2).